The primary structure comprises 552 residues: Keratin, type II cytoskeletal 6A (552 aa).

The span at 1 to 14 shows a compositional bias: polar residues; it reads MSTKTVIRSQTSHR. Residues 1–21 form a disordered region; it reads MSTKTVIRSQTSHRGFSAGSA. A head region spans residues 1–151; sequence MSTKTVIRSQ…DPTIQRVRTE (151 aa). The segment at 152 to 187 is coil 1A; sequence EREQIKTLNNKFASFIDKVRFLEQQNKVLDTKWALL. The IF rod domain occupies 152–465; sequence EREQIKTLNN…TLLEGEECRL (314 aa). A linker 1 region spans residues 188 to 206; the sequence is QEQGTKTVRQGLETLFEQY. The segment at 207–298 is coil 1B; sequence INDLRKELDN…ALYEAELSQM (92 aa). The tract at residues 299-322 is linker 12; the sequence is QTHISDTSVVLSMDNNRSLDLDSI. The coil 2 stretch occupies residues 323–461; the sequence is IAEVKAQYEE…ATYRTLLEGE (139 aa). The tail stretch occupies residues 462–552; the sequence is ECRLNGEGVG…TSSTRKSYRP (91 aa). Residues 524-552 form a disordered region; that stretch reads ISSGLSSSGGSSSTIKYTTTSSTRKSYRP. Residues 525 to 552 are compositionally biased toward low complexity; that stretch reads SSGLSSSGGSSSTIKYTTTSSTRKSYRP.

The protein belongs to the intermediate filament family. As to quaternary structure, heterodimer of a type I and a type II keratin. KRT6 isomers associate with KRT16 and/or KRT17. Interacts with TCHP.

Epidermis-specific type I keratin involved in wound healing. Involved in the activation of follicular keratinocytes after wounding, while it does not play a major role in keratinocyte proliferation or migration. Participates in the regulation of epithelial migration by inhibiting the activity of SRC during wound repair. The protein is Keratin, type II cytoskeletal 6A (Krt6a) of Rattus norvegicus (Rat).